Here is a 347-residue protein sequence, read N- to C-terminus: Selenide, water dikinase (347 aa).

Cys17 is an active-site residue. ATP contacts are provided by residues Lys20 and 48 to 50 (TRD). Asp51 is a Mg(2+) binding site. Residues Asp68, Asp91, and 139 to 141 (GHS) contribute to the ATP site. Asp91 is a binding site for Mg(2+). Mg(2+) is bound at residue Asp227.

The protein belongs to the selenophosphate synthase 1 family. Class I subfamily. Homodimer. The cofactor is Mg(2+).

It carries out the reaction hydrogenselenide + ATP + H2O = selenophosphate + AMP + phosphate + 2 H(+). Synthesizes selenophosphate from selenide and ATP. The sequence is that of Selenide, water dikinase from Escherichia coli O157:H7.